A 124-amino-acid chain; its full sequence is Large ribosomal subunit protein bL21 (124 aa).

The interval 105 to 124 (NAPSIGPRVRKAKPAAEAAE) is disordered.

This sequence belongs to the bacterial ribosomal protein bL21 family. In terms of assembly, part of the 50S ribosomal subunit. Contacts protein L20.

In terms of biological role, this protein binds to 23S rRNA in the presence of protein L20. This Rhodopseudomonas palustris (strain BisA53) protein is Large ribosomal subunit protein bL21.